The chain runs to 667 residues: DNA ligase (667 aa).

Residues 32–36, 81–82, and Glu-110 each bind NAD(+); these read DSEYD and SL. Residue Lys-112 is the N6-AMP-lysine intermediate of the active site. Residues Arg-133, Glu-167, Lys-283, and Lys-307 each coordinate NAD(+). The Zn(2+) site is built by Cys-401, Cys-404, Cys-419, and Cys-424. In terms of domain architecture, BRCT spans 586 to 667; it reads EGHPEFSGKT…FVDKQNELNS (82 aa).

This sequence belongs to the NAD-dependent DNA ligase family. LigA subfamily. It depends on Mg(2+) as a cofactor. Mn(2+) serves as cofactor.

It carries out the reaction NAD(+) + (deoxyribonucleotide)n-3'-hydroxyl + 5'-phospho-(deoxyribonucleotide)m = (deoxyribonucleotide)n+m + AMP + beta-nicotinamide D-nucleotide.. DNA ligase that catalyzes the formation of phosphodiester linkages between 5'-phosphoryl and 3'-hydroxyl groups in double-stranded DNA using NAD as a coenzyme and as the energy source for the reaction. It is essential for DNA replication and repair of damaged DNA. This chain is DNA ligase, found in Staphylococcus aureus (strain Mu3 / ATCC 700698).